The chain runs to 484 residues: UDP-N-acetylmuramate--L-alanine ligase (484 aa).

126 to 132 (GTHGKTT) serves as a coordination point for ATP.

The protein belongs to the MurCDEF family.

It is found in the cytoplasm. It carries out the reaction UDP-N-acetyl-alpha-D-muramate + L-alanine + ATP = UDP-N-acetyl-alpha-D-muramoyl-L-alanine + ADP + phosphate + H(+). Its pathway is cell wall biogenesis; peptidoglycan biosynthesis. In terms of biological role, cell wall formation. This chain is UDP-N-acetylmuramate--L-alanine ligase, found in Tolumonas auensis (strain DSM 9187 / NBRC 110442 / TA 4).